Here is a 217-residue protein sequence, read N- to C-terminus: Proteasome subunit beta type-6-A like protein (217 aa).

Positions 1–16 are cleaved as a propeptide — removed in mature form; that stretch reads MERHLMDSQIKGVSTG. Residue threonine 17 is the Nucleophile of the active site.

It belongs to the peptidase T1B family. As to quaternary structure, the 26S proteasome consists of a 20S proteasome core and two 19S regulatory subunits. The 20S proteasome core is composed of 28 subunits that are arranged in four stacked rings, resulting in a barrel-shaped structure. The two end rings are each formed by seven alpha subunits, and the two central rings are each formed by seven beta subunits. The catalytic chamber with the active sites is on the inside of the barrel.

The protein localises to the cytoplasm. It localises to the nucleus. The catalysed reaction is Cleavage of peptide bonds with very broad specificity.. Its function is as follows. The proteasome is a multicatalytic proteinase complex which is characterized by its ability to cleave peptides with Arg, Phe, Tyr, Leu, and Glu adjacent to the leaving group at neutral or slightly basic pH. The proteasome has an ATP-dependent proteolytic activity. This subunit is involved in antigen processing to generate class I binding peptides. The protein is Proteasome subunit beta type-6-A like protein (psmb6l-a) of Salmo salar (Atlantic salmon).